A 411-amino-acid chain; its full sequence is Translation initiation factor 2 subunit gamma (411 aa).

Residues 9 to 203 (QAEVNIGMVG…AIEDFIPTPK (195 aa)) enclose the tr-type G domain. Residues 18–25 (GHVDHGKT) are G1. Mg(2+) is bound by residues aspartate 21, threonine 25, glycine 46, and threonine 48. A GTP-binding site is contributed by 21 to 26 (DHGKTT). The segment at 46–50 (GITIK) is G2. The Zn(2+) site is built by cysteine 61, cysteine 64, cysteine 73, and cysteine 76. Residues 90-93 (DAPG) form a G3 region. Residues 146–149 (NKIE) and 181–183 (SAL) each bind GTP. Residues 146-149 (NKIE) are G4. A G5 region spans residues 181 to 183 (SAL).

The protein belongs to the TRAFAC class translation factor GTPase superfamily. Classic translation factor GTPase family. EIF2G subfamily. As to quaternary structure, heterotrimer composed of an alpha, a beta and a gamma chain. Requires Mg(2+) as cofactor.

It catalyses the reaction GTP + H2O = GDP + phosphate + H(+). In terms of biological role, eIF-2 functions in the early steps of protein synthesis by forming a ternary complex with GTP and initiator tRNA. The protein is Translation initiation factor 2 subunit gamma of Pyrococcus horikoshii (strain ATCC 700860 / DSM 12428 / JCM 9974 / NBRC 100139 / OT-3).